Consider the following 479-residue polypeptide: Protein ORD (479 aa).

The tract at residues 102-140 is disordered; sequence KEEETEPESESDLDEGPSTSKQALERMVQRAERKAKEAS. Residues 104-116 show a composition bias toward acidic residues; the sequence is EETEPESESDLDE. Residues 124–140 show a composition bias toward basic and acidic residues; the sequence is ALERMVQRAERKAKEAS.

In terms of assembly, interacts with Sce.

The protein localises to the nucleus. It localises to the chromosome. It is found in the centromere. Its function is as follows. Essential for proper maintenance of sister-chromatid cohesion in both male and female meiosis. Mutations in ord cause premature separation of the sister chromatids in meiosis I and random segregation in both meiotic divisions. Required for chiasma maintenance in female meiosis. Mutations in ord reduce recombination in female meiosis. This Drosophila melanogaster (Fruit fly) protein is Protein ORD (ord).